Here is a 237-residue protein sequence, read N- to C-terminus: MKPEVFYKTLADQGIQLTDQQKHQFHRYFQLLVEWNEKINLTAITEESEVYLKHFYDSIAPLLQGHIQNEPLRLLDIGAGAGFPSLPMKIIFPQLDVTIIDSLNKRINFLHLLAEELELEGVHFYHGRAEDFAQDKNFRAQFDLVTARAVARMQILSELTIPYLKLHGKLIALKASSAEDELTQAKNALNLLFAKVIENHDYTLPNGDPRTLTIVEKKKETPNKFPRKAGMPNKRPL.

S-adenosyl-L-methionine is bound by residues Gly-78, Phe-83, 129–130 (AE), and Arg-148. Residues 218 to 237 (KKETPNKFPRKAGMPNKRPL) are disordered.

It belongs to the methyltransferase superfamily. RNA methyltransferase RsmG family.

The protein resides in the cytoplasm. In terms of biological role, specifically methylates the N7 position of a guanine in 16S rRNA. The chain is Ribosomal RNA small subunit methyltransferase G from Streptococcus suis (strain 98HAH33).